A 250-amino-acid chain; its full sequence is 3-deoxy-manno-octulosonate cytidylyltransferase (250 aa).

The protein belongs to the KdsB family.

Its subcellular location is the cytoplasm. It catalyses the reaction 3-deoxy-alpha-D-manno-oct-2-ulosonate + CTP = CMP-3-deoxy-beta-D-manno-octulosonate + diphosphate. The protein operates within nucleotide-sugar biosynthesis; CMP-3-deoxy-D-manno-octulosonate biosynthesis; CMP-3-deoxy-D-manno-octulosonate from 3-deoxy-D-manno-octulosonate and CTP: step 1/1. Its pathway is bacterial outer membrane biogenesis; lipopolysaccharide biosynthesis. In terms of biological role, activates KDO (a required 8-carbon sugar) for incorporation into bacterial lipopolysaccharide in Gram-negative bacteria. This chain is 3-deoxy-manno-octulosonate cytidylyltransferase, found in Francisella tularensis subsp. holarctica (strain FTNF002-00 / FTA).